A 266-amino-acid polypeptide reads, in one-letter code: Protein-ADP-ribose hydrolase (266 aa).

The Macro domain occupies 74 to 265; sequence TDLKDLKPIK…LYKEAFNRDA (192 aa). Residues aspartate 93, isoleucine 94, and asparagine 107 each contribute to the ADP-D-ribose site. 3 residues coordinate Zn(2+): cysteine 113, histidine 118, and cysteine 120. ADP-D-ribose contacts are provided by cysteine 120, isoleucine 121, aspartate 122, serine 212, threonine 213, glycine 214, and phenylalanine 216.

The protein belongs to the MacroD-type family. Zn-Macro subfamily. Zn(2+) is required as a cofactor.

It catalyses the reaction 4-O-(ADP-D-ribosyl)-L-aspartyl-[protein] + H2O = L-aspartyl-[protein] + ADP-D-ribose + H(+). Functionally, ADP-ribosylhydrolase that specifically reverses the SirTM-mediated mono-ADP-ribosylation at an asparatate residue of GcvH-L, by releasing ADP-ribose from the target protein. May play a role in the regulation of the response to host-induced oxidative stress. This chain is Protein-ADP-ribose hydrolase, found in Staphylococcus aureus (strain COL).